The primary structure comprises 209 residues: Xanthine phosphoribosyltransferase 1 (209 aa).

S79 bears the Phosphoserine mark.

It is found in the cytoplasm. Its function is as follows. May act as a xanthine phosphoribosyltransferase involved in the synthesis of purine nucleotides. Such activity is however unclear in vivo. The chain is Xanthine phosphoribosyltransferase 1 (XPT1) from Saccharomyces cerevisiae (strain ATCC 204508 / S288c) (Baker's yeast).